Reading from the N-terminus, the 130-residue chain is Small ribosomal subunit protein uS8 (130 aa).

The protein belongs to the universal ribosomal protein uS8 family. As to quaternary structure, part of the 30S ribosomal subunit. Contacts proteins S5 and S12.

Functionally, one of the primary rRNA binding proteins, it binds directly to 16S rRNA central domain where it helps coordinate assembly of the platform of the 30S subunit. In Photorhabdus laumondii subsp. laumondii (strain DSM 15139 / CIP 105565 / TT01) (Photorhabdus luminescens subsp. laumondii), this protein is Small ribosomal subunit protein uS8.